Consider the following 26-residue polypeptide: Glycyl-poneratoxin (26 aa).

R25 carries the post-translational modification Arginine amide; in delta-paraponeritoxin-Pc1a.

In terms of processing, the glycine-PoTx is a non-amidated form of poneratoxin, with an extra-Gly at C-terminus. This loss of amidation does not alter toxin activity on Nav1.7/SCN9A. As to expression, expressed by the venom gland.

The protein resides in the secreted. Its function is as follows. Toxin that causes pain in vertebrates by targeting tetrodotoxin (TTX)-sensitive sodium channels in peripheral sensory neurons. Also blocks synaptic transmission and stimulates smooth muscle contraction. Converts the normally rapidly activating and inactivating sodium channel current into one that does not inactivate. Is active on both Nav1.6/SCN8A and Nav1.7/SCN9A sodium channels, with a much potent activity on Nav1.6/SCN8A (EC(50)=97 nM on human channels) than on Nav1.7/SCN9A (EC(50)=2.3 uM on human and EC(50)=1.8 uM on mouse channels). On these channels, causes a sustained current, a reduction in peak current amplitude and a hyperpolarising shift. Modulates Nav1.7/SCN9A in a non-competitive manner with TTX or tetracaine. Toxin-induced persistant current is very slowly reversible with repeated wash steps over 30 minutes. In vivo, shallow intraplantar injection in mice causes immediate, long-lasting and near-maximal nocifensive behaviors, which decrease with coinjection of TTX. When tested on insects, causes paralysis but not mortality at high doses. The polypeptide is Glycyl-poneratoxin (Paraponera clavata (Bullet ant)).